A 124-amino-acid polypeptide reads, in one-letter code: Protein MGF 110-4L (124 aa).

The signal sequence occupies residues methionine 1–arginine 28. N-linked (GlcNAc...) asparagine; by host glycosylation occurs at asparagine 64. The short motif at lysine 121–leucine 124 is the Prevents secretion from ER element.

The protein belongs to the asfivirus MGF 110 family.

The protein resides in the virion. It is found in the host endoplasmic reticulum-Golgi intermediate compartment. Functionally, causes the redistribution of lumenal ER protein to an enlarged ERGIC compartment. The chain is Protein MGF 110-4L from Ornithodoros (relapsing fever ticks).